We begin with the raw amino-acid sequence, 367 residues long: Heparan sulfate glucosamine 3-O-sulfotransferase 2 (367 aa).

The Cytoplasmic segment spans residues 1–19 (MAYRVLGRAGPPQPRRARR). A helical; Signal-anchor for type II membrane protein transmembrane segment spans residues 20–39 (LLFAFTLSLSCTYLCYSFLC). The Lumenal portion of the chain corresponds to 40 to 367 (CCDDLGRSRL…ETVGQDFRWE (328 aa)). The segment at 61–110 (AGGQKLLQKSRPCDPSGPTPSEPSAPSAPAAAVPAPRLSGSNHSGSPKLG) is disordered. Residues 84–96 (SAPSAPAAAVPAP) show a composition bias toward low complexity. Asn-102 carries N-linked (GlcNAc...) asparagine glycosylation. 124–128 (KGGTR) is a 3'-phosphoadenylyl sulfate binding site. Residues 146–152 (EPHFFDR) and 177–180 (KTPS) each bind substrate. Residue Asn-193 is glycosylated (N-linked (GlcNAc...) asparagine). Residues Arg-205 and Ser-213 each contribute to the 3'-phosphoadenylyl sulfate site. Asn-235 carries an N-linked (GlcNAc...) asparagine glycan. 245 to 246 (WN) is a substrate binding site. Asn-306 carries an N-linked (GlcNAc...) asparagine glycan. Cys-313 and Cys-325 are disulfide-bonded. Residue 330-334 (KGRTH) coordinates 3'-phosphoadenylyl sulfate.

It belongs to the sulfotransferase 1 family. As to expression, highly expressed in the brain and weakly expressed in the heart, placenta, lung and skeletal muscle.

It localises to the golgi apparatus membrane. It catalyses the reaction alpha-D-glucosaminyl-[heparan sulfate](n) + 3'-phosphoadenylyl sulfate = 3-sulfo-alpha-D-glucosaminyl-[heparan sulfate](n) + adenosine 3',5'-bisphosphate + H(+). Its function is as follows. Sulfotransferase that utilizes 3'-phospho-5'-adenylyl sulfate (PAPS) to catalyze the transfer of a sulfo group to an N-unsubstituted glucosamine linked to a 2-O-sulfo iduronic acid unit on heparan sulfate. Catalyzes the O-sulfation of glucosamine in GlcA2S-GlcNS. Unlike HS3ST1/3-OST-1, does not convert non-anticoagulant heparan sulfate to anticoagulant heparan sulfate. The polypeptide is Heparan sulfate glucosamine 3-O-sulfotransferase 2 (HS3ST2) (Homo sapiens (Human)).